Reading from the N-terminus, the 347-residue chain is UDP-N-acetylenolpyruvoylglucosamine reductase (347 aa).

Residues 27-197 form the FAD-binding PCMH-type domain; that stretch reads LPARAQRLAR…TGIELRLNKM (171 aa). Arg173 is a catalytic residue. Ser247 acts as the Proton donor in catalysis. Glu342 is a catalytic residue.

This sequence belongs to the MurB family. It depends on FAD as a cofactor.

The protein resides in the cytoplasm. The catalysed reaction is UDP-N-acetyl-alpha-D-muramate + NADP(+) = UDP-N-acetyl-3-O-(1-carboxyvinyl)-alpha-D-glucosamine + NADPH + H(+). Its pathway is cell wall biogenesis; peptidoglycan biosynthesis. In terms of biological role, cell wall formation. This Alcanivorax borkumensis (strain ATCC 700651 / DSM 11573 / NCIMB 13689 / SK2) protein is UDP-N-acetylenolpyruvoylglucosamine reductase.